The following is a 341-amino-acid chain: Phenylalanine--tRNA ligase alpha subunit (341 aa).

A Mg(2+)-binding site is contributed by E256.

The protein belongs to the class-II aminoacyl-tRNA synthetase family. Phe-tRNA synthetase alpha subunit type 1 subfamily. As to quaternary structure, tetramer of two alpha and two beta subunits. The cofactor is Mg(2+).

The protein localises to the cytoplasm. The enzyme catalyses tRNA(Phe) + L-phenylalanine + ATP = L-phenylalanyl-tRNA(Phe) + AMP + diphosphate + H(+). This chain is Phenylalanine--tRNA ligase alpha subunit, found in Leptospira interrogans serogroup Icterohaemorrhagiae serovar Lai (strain 56601).